Reading from the N-terminus, the 229-residue chain is Matrix protein (229 aa).

A dynamin binding motif is present at residues 2 to 4 (KSI). Positions 11-36 (AKKEKKREKKSNHGSHSMEWESPPSY) are disordered. Basic residues predominate over residues 13 to 23 (KEKKREKKSNH). Residues 33–36 (PPSY) carry the PPXY motif motif. The short motif at 42-45 (PSAP) is the PTAP/PSAP motif element.

This sequence belongs to the vesiculoviruses matrix protein family. Homomultimer. Interacts with viral nucleocapsid; this interaction contributes to the virion assembly. Interacts with the viral envelope glycoprotein; this interaction contributes to the virion assembly. Interacts with host RAE1-NUP98 complex. Interacts with host NEDD4 and TSG101. Interacts with host dynamin. Interacts with host NDUFAF4; the interaction inhibits viral propagation and is independent of interferon activation. Interacts with host GTF2H5; the interaction may inhibit host transcription. In terms of processing, phosphorylated by host.

It localises to the virion. The protein resides in the host endomembrane system. It is found in the host nucleus membrane. Its subcellular location is the host nucleus. The protein localises to the host cytoplasm. Forms a double layer around the helical nucleocapsid, the inner matrix layer binding to the N helix and the outer matrix layer binding to the envelope glycoprotein. Plays a major role in assembly and budding of virion, by recruiting cellular partners of the ESCRT complexes that play a key role in releasing the budding particle from the host membrane. Condensates the ribonucleocapsid core during virus assembly. Inhibits the host mRNA nuclear export thereby inducing the shut off of cellular transcription and preventing the interferon signaling and the establishment of antiviral state in infected cells. This shutoff presumably inhibits interferon signaling and thus establishment of antiviral state in virus infected cells. Induces cell-rounding, cytoskeleton disorganization and apoptosis in infected cell. Inhibits host transcription, possibly through interaction with host DNA repair factor IIH/TFIIH GTF2H5 subunit. The protein is Matrix protein (M) of Piry virus (PIRYV).